Consider the following 370-residue polypeptide: Protein-glutamate methylesterase/protein-glutamine glutaminase 3 (370 aa).

The region spanning 3–119 is the Response regulatory domain; it reads KVLIVDDSAL…SLNVSRIERE (117 aa). Aspartate 53 bears the 4-aspartylphosphate mark. The CheB-type methylesterase domain occupies 166-360; it reads SLTEIGVVLI…GQLNAWMSRT (195 aa). Residues serine 178, histidine 205, and aspartate 302 contribute to the active site.

It belongs to the CheB family. Phosphorylated by CheA. Phosphorylation of the N-terminal regulatory domain activates the methylesterase activity.

It is found in the cytoplasm. The catalysed reaction is [protein]-L-glutamate 5-O-methyl ester + H2O = L-glutamyl-[protein] + methanol + H(+). The enzyme catalyses L-glutaminyl-[protein] + H2O = L-glutamyl-[protein] + NH4(+). In terms of biological role, involved in chemotaxis. Part of a chemotaxis signal transduction system that modulates chemotaxis in response to various stimuli. Catalyzes the demethylation of specific methylglutamate residues introduced into the chemoreceptors (methyl-accepting chemotaxis proteins or MCP) by CheR. Also mediates the irreversible deamidation of specific glutamine residues to glutamic acid. The chain is Protein-glutamate methylesterase/protein-glutamine glutaminase 3 from Rhodospirillum rubrum (strain ATCC 11170 / ATH 1.1.1 / DSM 467 / LMG 4362 / NCIMB 8255 / S1).